We begin with the raw amino-acid sequence, 459 residues long: Cysteine--tRNA ligase (459 aa).

Cysteine 31 provides a ligand contact to Zn(2+). The 'HIGH' region motif lies at 33–43 (PTVYYNPHIGN). The Zn(2+) site is built by cysteine 216, histidine 241, and glutamate 245. The 'KMSKS' region signature appears at 274–278 (KMSKS). Lysine 277 contacts ATP.

The protein belongs to the class-I aminoacyl-tRNA synthetase family. In terms of assembly, monomer. Requires Zn(2+) as cofactor.

Its subcellular location is the cytoplasm. It carries out the reaction tRNA(Cys) + L-cysteine + ATP = L-cysteinyl-tRNA(Cys) + AMP + diphosphate. In Rickettsia africae (strain ESF-5), this protein is Cysteine--tRNA ligase.